The following is a 492-amino-acid chain: MKINLLTFGVSTLVERNIGYITQIIGPVLDAAFPPGKMPNIYNSLIVKGQNPAGQQINVTCEVQQLLGNNKVRAIAMSATDGLTRGMEVIDTGAPLSVPVGQATLGRIFNVLGEPVDNLGPINADKKSSIHEPAPAFTQLDTKLSIFETGIKVVDLLAPYRRGGKIGLFGGAGVGKTVLIMELINNIAKAHGGVSVFGGVGERTREGNDLYTEMKESKVINEQNLSESKVALVYGQMNEPPGARMRVGLTALTIAEYFRDVNKQDVLLFIDNIFRFVQAGSEVSALLGRMPSAVGYQPTLSTEMGSLQERITSTKEGSITSIQAVYVPADDLTDPAPATTFAHLDATTVLSRGLAAKGIYPAVDPLDSTSTMLQPWIVGEEHYETAQGVKQTLQRYKELQDIIAILGLDELSEEDRLTVARARKIERFLSQPFFVAEVFTGSPGKYVSLAETIKGFQMILSGELDSLPEQAFYLVGNIEEATAKAGISQMED.

170-177 (GGAGVGKT) provides a ligand contact to ATP.

This sequence belongs to the ATPase alpha/beta chains family. F-type ATPases have 2 components, CF(1) - the catalytic core - and CF(0) - the membrane proton channel. CF(1) has five subunits: alpha(3), beta(3), gamma(1), delta(1), epsilon(1). CF(0) has four main subunits: a(1), b(1), b'(1) and c(9-12).

Its subcellular location is the plastid. The protein localises to the chloroplast thylakoid membrane. The catalysed reaction is ATP + H2O + 4 H(+)(in) = ADP + phosphate + 5 H(+)(out). Its function is as follows. Produces ATP from ADP in the presence of a proton gradient across the membrane. The catalytic sites are hosted primarily by the beta subunits. The polypeptide is ATP synthase subunit beta, chloroplastic (Psilotum nudum (Whisk fern)).